The following is a 103-amino-acid chain: Glutaredoxin-C1 (103 aa).

Residues 1–102 (MDRVNRLAAQ…PLLRNAGALW (102 aa)) form the Glutaredoxin domain. An intrachain disulfide couples Cys21 to Cys24.

Belongs to the glutaredoxin family. CC-type subfamily.

It localises to the cytoplasm. Functionally, has a glutathione-disulfide oxidoreductase activity in the presence of NADPH and glutathione reductase. Reduces low molecular weight disulfides and proteins. This Oryza sativa subsp. japonica (Rice) protein is Glutaredoxin-C1 (GRXC1).